The sequence spans 500 residues: Lysine--tRNA ligase (500 aa).

Mg(2+)-binding residues include Glu-410 and Glu-417.

This sequence belongs to the class-II aminoacyl-tRNA synthetase family. As to quaternary structure, homodimer. Mg(2+) serves as cofactor.

The protein localises to the cytoplasm. The enzyme catalyses tRNA(Lys) + L-lysine + ATP = L-lysyl-tRNA(Lys) + AMP + diphosphate. The chain is Lysine--tRNA ligase from Shewanella amazonensis (strain ATCC BAA-1098 / SB2B).